A 46-amino-acid chain; its full sequence is Protein PsbN (46 aa).

A helical transmembrane segment spans residues 10–30; sequence LAIIVLVVLLGLTGLGVYMAF.

It belongs to the PsbN family.

The protein localises to the cellular thylakoid membrane. Functionally, may play a role in photosystem I and II biogenesis. In Prochlorococcus marinus (strain MIT 9211), this protein is Protein PsbN.